The following is a 530-amino-acid chain: Ubiquitin carboxyl-terminal hydrolase 17-like protein 10 (530 aa).

In terms of domain architecture, USP spans 80–375 (AGLQNMGNTC…QAYVLFYIQK (296 aa)). Cysteine 89 serves as the catalytic Nucleophile. Histidine 334 serves as the catalytic Proton acceptor. 2 stretches are compositionally biased toward basic and acidic residues: residues 382-392 (SESVSRGREPR) and 398-410 (DTDR…ELKR). 2 disordered regions span residues 382-410 (SESV…ELKR) and 477-530 (NHHP…LVCQ). Over residues 484–495 (SSLLNLSSTTPT) the composition is skewed to low complexity. The segment covering 496–505 (DQESMNTGTL) has biased composition (polar residues). The segment covering 510–524 (GRTRRSKGKNKHSKR) has biased composition (basic residues).

The protein belongs to the peptidase C19 family. USP17 subfamily.

Its subcellular location is the nucleus. It localises to the endoplasmic reticulum. The enzyme catalyses Thiol-dependent hydrolysis of ester, thioester, amide, peptide and isopeptide bonds formed by the C-terminal Gly of ubiquitin (a 76-residue protein attached to proteins as an intracellular targeting signal).. Deubiquitinating enzyme that removes conjugated ubiquitin from specific proteins to regulate different cellular processes that may include cell proliferation, progression through the cell cycle, apoptosis, cell migration, and the cellular response to viral infection. This Homo sapiens (Human) protein is Ubiquitin carboxyl-terminal hydrolase 17-like protein 10 (USP17L10).